Reading from the N-terminus, the 345-residue chain is Lysine-specific demethylase JMJ32 (345 aa).

The JmjC domain maps to 122 to 315 (GYLQQQNDCF…IKYAYFNFLQ (194 aa)). His174, Asp176, and His281 together coordinate Fe cation.

Belongs to the JARID1 histone demethylase family. Fe(2+) serves as cofactor. Expressed ubiquitously including in vasculatures, leaves, siliques, roots and inflorescences. Present in the root meristem. Accumulates in cotyledons and root tips of young seedlings.

It is found in the nucleus. The protein resides in the cytoplasm. Its subcellular location is the endoplasmic reticulum. The enzyme catalyses N(6),N(6),N(6)-trimethyl-L-lysyl(27)-[histone H3] + 2-oxoglutarate + O2 = N(6),N(6)-dimethyl-L-lysyl(27)-[histone H3] + formaldehyde + succinate + CO2. It carries out the reaction N(6),N(6)-dimethyl-L-lysyl(27)-[histone H3] + 2-oxoglutarate + O2 = N(6)-methyl-L-lysyl(27)-[histone H3] + formaldehyde + succinate + CO2. The catalysed reaction is N(6),N(6),N(6)-trimethyl-L-lysyl(27)-[histone H3] + 2 2-oxoglutarate + 2 O2 = N(6)-methyl-L-lysyl(27)-[histone H3] + 2 formaldehyde + 2 succinate + 2 CO2. Its function is as follows. Histone demethylase that demethylates 'Lys-27' (H3K27me) of histone H3 with a specific activity for H3K27me3 and H3K27me2, and involved in the regulation of gene expression. No activity on H3K27me1. Together with JMJ30, regulates the flowering-repressor FLOWERING LOCUS C (FLC) locus by removing the repressive histone modification H3 lysine 27 trimethylation (H3K27me3), especially at elevated temperatures (e.g. 29 degrees Celsius), thus preventing extreme precocious flowering. JMJ30 and JMJ32 are regulators involved in the integration of abscisic acid (ABA) and brassinosteroids (BR) signaling pathways. Together with JMJ30, controls ABA-mediated growth arrest during the post-germination stage in unfavorable conditions, and responses to ABA during root development, via the removal of repressive histone mark (H3K27me3) from the SnRK2.8 promoter, thus promoting SnRK2.8 expression and subsequent kinase-dependent ABI3 activation. In addition, removes the repressive histone marks (H3K27me3) from the BZR1 locus in response to stress and ABA, thus activating the BR signaling pathway which, in turn, inhibits the ABA signaling pathway. This Arabidopsis thaliana (Mouse-ear cress) protein is Lysine-specific demethylase JMJ32.